Consider the following 459-residue polypeptide: E3 ubiquitin-protein ligase RNF25 (459 aa).

The RWD domain occupies 18 to 128 (SEVEVLESIY…EKGKEILTDN (111 aa)). Positions 135, 138, 153, 155, 158, 161, 198, and 201 each coordinate Zn(2+). The RING-type zinc-finger motif lies at 135–202 (CVICLYGFQE…AVGVQCPVCR (68 aa)). Disordered regions lie at residues 268–309 (PPAP…PPLP) and 322–459 (TRSN…KDGS). A compositionally biased stretch (polar residues) spans 282-303 (KGSQPPSTLAAELSTSPAVQST). Basic and acidic residues-rich tracts occupy residues 349–370 (QPER…RDTQ), 378–389 (PLKEPMDLKPEP), 413–424 (RTRDCVRWERSK), and 446–459 (TRRE…KDGS). S450 bears the Phosphoserine mark.

It belongs to the RNF25 family. Interacts with UBE2D2, and may also interact with UBE2E1 and UBE2E3. Interacts with RELA/p65. Post-translationally, ubiquitinated; autoubiquitinated.

It is found in the cytoplasm. It carries out the reaction S-ubiquitinyl-[E2 ubiquitin-conjugating enzyme]-L-cysteine + [acceptor protein]-L-lysine = [E2 ubiquitin-conjugating enzyme]-L-cysteine + N(6)-ubiquitinyl-[acceptor protein]-L-lysine.. The protein operates within protein modification; protein ubiquitination. In terms of biological role, E3 ubiquitin-protein ligase that plays a key role in the RNF14-RNF25 translation quality control pathway, a pathway that takes place when a ribosome has stalled during translation, and which promotes ubiquitination and degradation of translation factors on stalled ribosomes. Catalyzes ubiquitination of RPS27A in response to ribosome collisions, promoting activation of RNF14. RNF25 catalyzes ubiquitination of other ribosomal proteins on stalled ribosomes, such as RPL0, RPL1, RPL12, RPS13 and RPS17. Also involved in ubiquitination and degradation of stalled ETF1/eRF1. Independently of its function in the response to stalled ribosomes, mediates ubiquitination and subsequent proteasomal degradation of NKD2. May also stimulate transcription mediated by NF-kappa-B via its interaction with RELA/p65. The chain is E3 ubiquitin-protein ligase RNF25 from Homo sapiens (Human).